Consider the following 906-residue polypeptide: Protein translocase subunit SecA (906 aa).

Residues Q89, 107-111 (GEGKT), and D502 contribute to the ATP site. Zn(2+)-binding residues include C890, C892, C901, and H902.

The protein belongs to the SecA family. As to quaternary structure, monomer and homodimer. Part of the essential Sec protein translocation apparatus which comprises SecA, SecYEG and auxiliary proteins SecDF-YajC and YidC. Requires Zn(2+) as cofactor.

Its subcellular location is the cell inner membrane. It localises to the cytoplasm. The catalysed reaction is ATP + H2O + cellular proteinSide 1 = ADP + phosphate + cellular proteinSide 2.. In terms of biological role, part of the Sec protein translocase complex. Interacts with the SecYEG preprotein conducting channel. Has a central role in coupling the hydrolysis of ATP to the transfer of proteins into and across the cell membrane, serving both as a receptor for the preprotein-SecB complex and as an ATP-driven molecular motor driving the stepwise translocation of polypeptide chains across the membrane. The sequence is that of Protein translocase subunit SecA from Brucella suis biovar 1 (strain 1330).